The sequence spans 93 residues: uncharacterized protein (93 aa).

Residues 73–93 (KWTVSGPVKQDTGKTDPAEKN) form a disordered region. A compositionally biased stretch (basic and acidic residues) spans 83–93 (DTGKTDPAEKN).

This is an uncharacterized protein from Rhodobacter capsulatus (Rhodopseudomonas capsulata).